The following is a 501-amino-acid chain: UPF0616 protein C1687.04 (501 aa).

This sequence belongs to the UPF0616 family.

It is found in the cytoplasm. Its subcellular location is the nucleus. The sequence is that of UPF0616 protein C1687.04 from Schizosaccharomyces pombe (strain 972 / ATCC 24843) (Fission yeast).